Here is a 568-residue protein sequence, read N- to C-terminus: 2-succinyl-5-enolpyruvyl-6-hydroxy-3-cyclohexene-1-carboxylate synthase (568 aa).

This sequence belongs to the TPP enzyme family. MenD subfamily. As to quaternary structure, homodimer. Mg(2+) is required as a cofactor. The cofactor is Mn(2+). It depends on thiamine diphosphate as a cofactor.

It catalyses the reaction isochorismate + 2-oxoglutarate + H(+) = 5-enolpyruvoyl-6-hydroxy-2-succinyl-cyclohex-3-ene-1-carboxylate + CO2. Its pathway is quinol/quinone metabolism; 1,4-dihydroxy-2-naphthoate biosynthesis; 1,4-dihydroxy-2-naphthoate from chorismate: step 2/7. The protein operates within quinol/quinone metabolism; menaquinone biosynthesis. In terms of biological role, catalyzes the thiamine diphosphate-dependent decarboxylation of 2-oxoglutarate and the subsequent addition of the resulting succinic semialdehyde-thiamine pyrophosphate anion to isochorismate to yield 2-succinyl-5-enolpyruvyl-6-hydroxy-3-cyclohexene-1-carboxylate (SEPHCHC). This chain is 2-succinyl-5-enolpyruvyl-6-hydroxy-3-cyclohexene-1-carboxylate synthase, found in Pasteurella multocida (strain Pm70).